We begin with the raw amino-acid sequence, 167 residues long: UPF0179 protein PAE0681 (167 aa).

The tract at residues 142-167 is disordered; sequence PSPSGSSISATSQGPSRAPPSRRLLK. Low complexity predominate over residues 145–157; sequence SGSSISATSQGPS.

This sequence belongs to the UPF0179 family.

In Pyrobaculum aerophilum (strain ATCC 51768 / DSM 7523 / JCM 9630 / CIP 104966 / NBRC 100827 / IM2), this protein is UPF0179 protein PAE0681.